We begin with the raw amino-acid sequence, 329 residues long: Nuclear pore complex protein NUP35 (329 aa).

Disordered regions lie at residues 48-105 (NFGG…GKGK) and 123-167 (VSGS…PPRE). Polar residues predominate over residues 123 to 139 (VSGSPSWWSQSKAGSST). The RRM Nup35-type domain occupies 183 to 264 (LDEEEWVTVY…KPVDPIQKQA (82 aa)). The tract at residues 271–315 (NQGFMPLPPPSSTRNTARPLSRPQYLQNGSAFSPQPSGGAMASPS) is disordered. A compositionally biased stretch (polar residues) spans 282–306 (STRNTARPLSRPQYLQNGSAFSPQP).

The protein belongs to the Nup35 family. In terms of assembly, part of the nuclear pore complex (NPC). The NPC has an eight-fold symmetrical structure comprising a central transport channel and two rings, the cytoplasmic and nuclear rings, to which eight filaments are attached. The cytoplasmic filaments have loose ends, while the nuclear filaments are joined in a distal ring, forming a nuclear basket. NPCs are highly dynamic in configuration and composition, and can be devided in 3 subcomplexes, the NUP62 subcomplex, the NUP107-160 subcomplex and the NUP93 subcomplex, containing approximately 30 different nucleoporin proteins.

The protein localises to the nucleus. Its subcellular location is the nuclear pore complex. This is Nuclear pore complex protein NUP35 from Arabidopsis thaliana (Mouse-ear cress).